Here is a 71-residue protein sequence, read N- to C-terminus: MVLRQLSRKASVKVSKTWSGTKKRAQRILIFLLEFLLDFCTGEDSVDGKKRQRHSGLTEQTYSALPEPKAT.

Topologically, residues 1–27 (MVLRQLSRKASVKVSKTWSGTKKRAQR) are cytoplasmic. Phosphoserine; by host is present on residues Ser-7 and Ser-11. At Thr-21 the chain carries Phosphothreonine; by host. A helical; Signal-anchor for type II membrane protein membrane pass occupies residues 28–44 (ILIFLLEFLLDFCTGED). At 45-71 (SVDGKKRQRHSGLTEQTYSALPEPKAT) the chain is on the extracellular side. The tract at residues 45–71 (SVDGKKRQRHSGLTEQTYSALPEPKAT) is disordered.

The protein belongs to the polyomavirus agnoprotein family. In terms of assembly, homooligomer. Interacts with VP1. Interacts with large T antigen; this interaction may impact upon the activity of T-antigen on the control of viral gene transcription and replication. Interacts with small t antigen. Interacts with host PP2A subunits for dephosphorylation. Interacts (via N-terminus) with host YBX1; this interaction modulates transcriptional activity genomic promoters. Interacts (via N-terminus) with host TP53. Interacts with host FEZ1; this interaction disrupts the association between FEZ1 and microtubules. Interacts with host CBX5; this interaction induces the dissociation of CBX5 from LBR, resulting in destabilization of the nuclear envelope. Post-translationally, phosphorylated by host PKC. Phosphorylation alters the stability and may also have an impact on the subcellular location.

The protein resides in the host cytoplasm. It localises to the host nucleus membrane. It is found in the host rough endoplasmic reticulum membrane. The protein localises to the host cell membrane. Its function is as follows. Alters the structure of the nuclear envelope by interacting with host CBX5 and disrupting CBX5 association with LBR. Involved in the perinuclear-nuclear localization of the capsid protein VP1 during virion assembly and maturation. Plays an important role in the release of progeny virions from infected cells and in viral propagation, probably by acting as a viral ionic channel in the host plasma membrane. Allows influx of extracellular calcium ions in the host cell. May contribute to viral genome transcription and translation of viral late proteins. This chain is Agnoprotein, found in Homo sapiens (Human).